The following is a 599-amino-acid chain: Elongation factor 4 (599 aa).

Residues 2-184 (KNIRNFSIIA…RLVRDIPPPQ (183 aa)) enclose the tr-type G domain. GTP contacts are provided by residues 14-19 (DHGKST) and 131-134 (NKID).

It belongs to the TRAFAC class translation factor GTPase superfamily. Classic translation factor GTPase family. LepA subfamily.

The protein localises to the cell inner membrane. It carries out the reaction GTP + H2O = GDP + phosphate + H(+). Its function is as follows. Required for accurate and efficient protein synthesis under certain stress conditions. May act as a fidelity factor of the translation reaction, by catalyzing a one-codon backward translocation of tRNAs on improperly translocated ribosomes. Back-translocation proceeds from a post-translocation (POST) complex to a pre-translocation (PRE) complex, thus giving elongation factor G a second chance to translocate the tRNAs correctly. Binds to ribosomes in a GTP-dependent manner. This chain is Elongation factor 4, found in Salmonella paratyphi A (strain ATCC 9150 / SARB42).